Reading from the N-terminus, the 338-residue chain is MSRIAVMGSGAWGTAIALHLARQSEHELLLWSHSARVAESIRAFGENRDFLPGYPVPPALAVTVTADAEAALEFAEIIISVMPSHHVRHSYEQIFAPYLTPSHRILSATKGLEDATYLRMSQVISDVLLRRGLDLPLAVLGGPSFAQEVAAGSPTAVTVASKDAAFAGELQQVFSNGTLRLYTNDDVCGVEMGGALKNIIAIASGVVTGLGLGHNSTAAIITRGIAEMTRLAVACGGRRETLAGLAGLGDLVLTCTGSLSRNRTVGVELGKGRGLDDILAGLGGKVAEGVRTTAAALGLAASLGVEMPIAQQVHTVLQGQASPLQAMQYLMSRPGRDE.

NADPH is bound by residues Trp12, His33, and Lys110. Residues Lys110, Gly142, and Ser144 each contribute to the sn-glycerol 3-phosphate site. NADPH is bound at residue Ala146. Lys197, Asp250, Ser260, Arg261, and Asn262 together coordinate sn-glycerol 3-phosphate. The Proton acceptor role is filled by Lys197. NADPH is bound at residue Arg261. Residues Val286 and Glu288 each coordinate NADPH.

It belongs to the NAD-dependent glycerol-3-phosphate dehydrogenase family.

The protein localises to the cytoplasm. The enzyme catalyses sn-glycerol 3-phosphate + NAD(+) = dihydroxyacetone phosphate + NADH + H(+). It carries out the reaction sn-glycerol 3-phosphate + NADP(+) = dihydroxyacetone phosphate + NADPH + H(+). It functions in the pathway membrane lipid metabolism; glycerophospholipid metabolism. Catalyzes the reduction of the glycolytic intermediate dihydroxyacetone phosphate (DHAP) to sn-glycerol 3-phosphate (G3P), the key precursor for phospholipid synthesis. The protein is Glycerol-3-phosphate dehydrogenase [NAD(P)+] of Acidobacterium capsulatum (strain ATCC 51196 / DSM 11244 / BCRC 80197 / JCM 7670 / NBRC 15755 / NCIMB 13165 / 161).